Consider the following 715-residue polypeptide: uncharacterized protein (715 aa).

4 disordered regions span residues 192 to 216 (ASSVEESNRANNTSPYPPSNSSVTA), 300 to 348 (NEEV…TSKR), 461 to 481 (ASSSSFGRSHSHLGTSLRSNE), and 580 to 630 (FTVS…KPPK). Residues 202–213 (NNTSPYPPSNSS) show a composition bias toward low complexity. Polar residues-rich tracts occupy residues 301-326 (EEVSNNHARSPHSSRACNTIPSNKND) and 472-481 (HLGTSLRSNE). Over residues 601–614 (TDSSPSDTISSSPT) the composition is skewed to low complexity.

This is an uncharacterized protein from Schizosaccharomyces pombe (strain 972 / ATCC 24843) (Fission yeast).